A 363-amino-acid chain; its full sequence is Pyrimidine monooxygenase RutA (363 aa).

FMN is bound by residues 49–50 (IK), Asn-115, Glu-124, 140–141 (RY), and Ser-190.

It belongs to the NtaA/SnaA/DszA monooxygenase family. RutA subfamily.

The catalysed reaction is uracil + FMNH2 + NADH + O2 = (Z)-3-ureidoacrylate + FMN + NAD(+) + H2O + H(+). The enzyme catalyses thymine + FMNH2 + NADH + O2 = (Z)-2-methylureidoacrylate + FMN + NAD(+) + H2O + H(+). Functionally, catalyzes the pyrimidine ring opening between N-3 and C-4 by an unusual flavin hydroperoxide-catalyzed mechanism, adding oxygen atoms in the process to yield ureidoacrylate peracid, that immediately reacts with FMN forming ureidoacrylate and FMN-N(5)-oxide. The FMN-N(5)-oxide reacts spontaneously with NADH to produce FMN. Requires the flavin reductase RutF to regenerate FMN in vivo. The sequence is that of Pyrimidine monooxygenase RutA from Enterobacter cloacae subsp. cloacae (strain ATCC 13047 / DSM 30054 / NBRC 13535 / NCTC 10005 / WDCM 00083 / NCDC 279-56).